Here is a 158-residue protein sequence, read N- to C-terminus: Mitotic-spindle organizing protein 2 (158 aa).

Ser-34 carries the post-translational modification Phosphoserine. Residues 81–158 (AGQRVASDSQ…PGRSPPRSGT (78 aa)) form a disordered region. A compositionally biased stretch (gly residues) spans 110 to 119 (KGGGALGGGP). Residue Ser-152 is modified to Phosphoserine.

This sequence belongs to the MOZART2 family. Associates with the gamma-tubulin ring complex (gTuRC) consisting of TUBGCP2, TUBGCP3, TUBGCP4, TUBGCP5 and TUBGCP6 and gamma-tubulin TUBG1 or TUBG2; within the complex, interacts with TUBGCP2; the interaction plays a role in gTuRC activation.

The protein resides in the cytoplasm. It is found in the cytoskeleton. Its subcellular location is the microtubule organizing center. It localises to the centrosome. The protein localises to the spindle. Functionally, required for the recruitment and the assembly of the gamma-tubulin ring complex (gTuRC) at the centrosome. The gTuRC regulates the minus-end nucleation of alpha-beta tubulin heterodimers that grow into microtubule protafilaments, a critical step in centrosome duplication and spindle formation. This is Mitotic-spindle organizing protein 2 (MZT2) from Bos taurus (Bovine).